The sequence spans 451 residues: Transcription factor TGAL8 (451 aa).

Positions 1–22 (MAYPSTSGMIQASSSLHGSITR) are enriched in polar residues. Disordered regions lie at residues 1–32 (MAYP…DMPS) and 70–151 (FPSQ…PKTL). Residues 141-150 (KGPKTPDPKT) show a composition bias toward basic and acidic residues. The 45-residue stretch at 147–191 (DPKTLRRLAQNREAARKSRLRKKAYIQQLETGRIRLAHLEQEIQF) folds into the bZIP domain. Residues 149–169 (KTLRRLAQNREAARKSRLRKK) form a basic motif region. The leucine-zipper stretch occupies residues 175-189 (LETGRIRLAHLEQEI). The 237-residue stretch at 208–444 (AALFNLEYER…RALALFWTTT (237 aa)) folds into the DOG1 domain.

Belongs to the bZIP family. In terms of assembly, interacts with NPR5/NH4, NH5.1 and NH5.2.

Its subcellular location is the nucleus. In terms of biological role, transcriptional regulator involved in defense response. This chain is Transcription factor TGAL8, found in Oryza sativa subsp. japonica (Rice).